The chain runs to 329 residues: (+)-eremophilene synthase (329 aa).

Residues Asp91 and Glu96 each coordinate Mg(2+). The DDXXD motif motif lies at 91-95; it reads DDAYD. Arg185 is a substrate binding site. Positions 231 and 235 each coordinate Mg(2+). Lys238 is a binding site for substrate. Glu239 provides a ligand contact to Mg(2+). 317–318 serves as a coordination point for substrate; the sequence is RY.

This sequence belongs to the terpene synthase family. Requires Mg(2+) as cofactor.

The enzyme catalyses (2E,6E)-farnesyl diphosphate = (+)-eremophilene + diphosphate. It functions in the pathway secondary metabolite biosynthesis; terpenoid biosynthesis. Catalyzes the conversion of (2E,6E)-farnesyl diphosphate (FPP) to yield the bicyclic sesquiterpene eremophilene via a 1,10-cyclization, which requires the abstraction of the pyrophosphate from FPP to yield the (E,E)-germacradienyl cation. The only accepted substrate is farnesyl diphosphate (FPP). The protein is (+)-eremophilene synthase of Sorangium cellulosum (strain So ce56) (Polyangium cellulosum (strain So ce56)).